We begin with the raw amino-acid sequence, 348 residues long: Protein RecA (348 aa).

66–73 (GPESSGKT) contributes to the ATP binding site.

Belongs to the RecA family.

The protein resides in the cytoplasm. Can catalyze the hydrolysis of ATP in the presence of single-stranded DNA, the ATP-dependent uptake of single-stranded DNA by duplex DNA, and the ATP-dependent hybridization of homologous single-stranded DNAs. It interacts with LexA causing its activation and leading to its autocatalytic cleavage. The chain is Protein RecA from Neisseria meningitidis serogroup B (strain ATCC BAA-335 / MC58).